Consider the following 387-residue polypeptide: 1-deoxy-D-xylulose 5-phosphate reductoisomerase (387 aa).

8 residues coordinate NADPH: Thr-10, Gly-11, Ser-12, Ile-13, Gly-36, Lys-37, Asn-38, and Asn-123. A 1-deoxy-D-xylulose 5-phosphate-binding site is contributed by Lys-124. Glu-125 serves as a coordination point for NADPH. Residue Asp-149 participates in Mn(2+) binding. Ser-150, Glu-151, Ser-175, and His-198 together coordinate 1-deoxy-D-xylulose 5-phosphate. Glu-151 contributes to the Mn(2+) binding site. Gly-204 lines the NADPH pocket. 1-deoxy-D-xylulose 5-phosphate is bound by residues Ser-211, Asn-216, Lys-217, and Glu-220. Glu-220 contributes to the Mn(2+) binding site.

This sequence belongs to the DXR family. Mg(2+) is required as a cofactor. Requires Mn(2+) as cofactor.

The enzyme catalyses 2-C-methyl-D-erythritol 4-phosphate + NADP(+) = 1-deoxy-D-xylulose 5-phosphate + NADPH + H(+). It participates in isoprenoid biosynthesis; isopentenyl diphosphate biosynthesis via DXP pathway; isopentenyl diphosphate from 1-deoxy-D-xylulose 5-phosphate: step 1/6. Its function is as follows. Catalyzes the NADPH-dependent rearrangement and reduction of 1-deoxy-D-xylulose-5-phosphate (DXP) to 2-C-methyl-D-erythritol 4-phosphate (MEP). The protein is 1-deoxy-D-xylulose 5-phosphate reductoisomerase of Pelotomaculum thermopropionicum (strain DSM 13744 / JCM 10971 / SI).